The primary structure comprises 278 residues: Elongation factor Ts (278 aa).

Residues 82-85 (TDFV) are involved in Mg(2+) ion dislocation from EF-Tu.

The protein belongs to the EF-Ts family.

It localises to the cytoplasm. Functionally, associates with the EF-Tu.GDP complex and induces the exchange of GDP to GTP. It remains bound to the aminoacyl-tRNA.EF-Tu.GTP complex up to the GTP hydrolysis stage on the ribosome. The polypeptide is Elongation factor Ts (tsf) (Streptomyces coelicolor (strain ATCC BAA-471 / A3(2) / M145)).